The sequence spans 197 residues: Ribonuclease HII (197 aa).

Residues 9–197 (ELIAGVDEVG…APVKKALEQF (189 aa)) form the RNase H type-2 domain. Residues Asp-15, Glu-16, and Asp-107 each contribute to the a divalent metal cation site.

Belongs to the RNase HII family. Requires Mn(2+) as cofactor. The cofactor is Mg(2+).

It is found in the cytoplasm. The enzyme catalyses Endonucleolytic cleavage to 5'-phosphomonoester.. Endonuclease that specifically degrades the RNA of RNA-DNA hybrids. This is Ribonuclease HII from Haemophilus influenzae (strain PittGG).